A 1244-amino-acid polypeptide reads, in one-letter code: ATP-dependent helicase/nuclease subunit A (1244 aa).

In terms of domain architecture, UvrD-like helicase ATP-binding spans 4–477 (TKWTEEQLSA…IQLYKNFRSR (474 aa)). 25–32 (AAAGSGKT) contacts ATP. The UvrD-like helicase C-terminal domain maps to 517 to 811 (KNVDDIIGGP…RIMSIHKSKG (295 aa)).

It belongs to the helicase family. AddA subfamily. Heterodimer of AddA and AddB/RexB. Requires Mg(2+) as cofactor.

It catalyses the reaction Couples ATP hydrolysis with the unwinding of duplex DNA by translocating in the 3'-5' direction.. The enzyme catalyses ATP + H2O = ADP + phosphate + H(+). Functionally, the heterodimer acts as both an ATP-dependent DNA helicase and an ATP-dependent, dual-direction single-stranded exonuclease. Recognizes the chi site generating a DNA molecule suitable for the initiation of homologous recombination. The AddA nuclease domain is required for chi fragment generation; this subunit has the helicase and 3' -&gt; 5' nuclease activities. In Clostridium botulinum (strain Alaska E43 / Type E3), this protein is ATP-dependent helicase/nuclease subunit A.